Here is a 210-residue protein sequence, read N- to C-terminus: Large ribosomal subunit protein uL4 (210 aa).

Over residues 44–54 the composition is skewed to polar residues; sequence QRQGTASTLTR. Residues 44–96 are disordered; the sequence is QRQGTASTLTRSEVRGGGRKPYKQKGTGRARQGSIRTPLRPGGGVIFGPKPRS. A compositionally biased stretch (basic residues) spans 60 to 71; it reads GGRKPYKQKGTG.

It belongs to the universal ribosomal protein uL4 family. Part of the 50S ribosomal subunit.

One of the primary rRNA binding proteins, this protein initially binds near the 5'-end of the 23S rRNA. It is important during the early stages of 50S assembly. It makes multiple contacts with different domains of the 23S rRNA in the assembled 50S subunit and ribosome. Its function is as follows. Forms part of the polypeptide exit tunnel. The polypeptide is Large ribosomal subunit protein uL4 (Prochlorococcus marinus (strain MIT 9515)).